Consider the following 81-residue polypeptide: Sulfur carrier protein TusA (81 aa).

Cysteine 19 (cysteine persulfide intermediate) is an active-site residue.

This sequence belongs to the sulfur carrier protein TusA family. Interacts with IscS.

The protein resides in the cytoplasm. It functions in the pathway tRNA modification. In terms of biological role, sulfur carrier protein involved in sulfur trafficking in the cell. Part of a sulfur-relay system required for 2-thiolation during synthesis of 2-thiouridine of the modified wobble base 5-methylaminomethyl-2-thiouridine (mnm(5)s(2)U) in tRNA. Interacts with IscS and stimulates its cysteine desulfurase activity. Accepts an activated sulfur from IscS, which is then transferred to TusD, and thus determines the direction of sulfur flow from IscS to 2-thiouridine formation. Also appears to be involved in sulfur transfer for the biosynthesis of molybdopterin. The sequence is that of Sulfur carrier protein TusA from Erwinia tasmaniensis (strain DSM 17950 / CFBP 7177 / CIP 109463 / NCPPB 4357 / Et1/99).